A 179-amino-acid polypeptide reads, in one-letter code: Ferric nitrobindin-like protein (179 aa).

The GXWXGXG signature appears at 17–23 (GRWEGLG).

Belongs to the nitrobindin family.

This chain is Ferric nitrobindin-like protein, found in Thermobifida fusca (strain YX).